The primary structure comprises 281 residues: Large ribosomal subunit protein uL22 (281 aa).

The segment at M1 to V225 is large ribosomal subunit protein uL22. 2 disordered regions span residues R137 to A175 and A199 to R281. Over residues T139–L153 the composition is skewed to basic residues. Composition is skewed to low complexity over residues P159–A175 and A199–A239. The unknown stretch occupies residues A226 to R281. Over residues R261–D271 the composition is skewed to basic and acidic residues. The segment covering A272–R281 has biased composition (acidic residues).

It belongs to the universal ribosomal protein uL22 family. Part of the 50S ribosomal subunit.

Its function is as follows. The globular domain of the protein is located near the polypeptide exit tunnel on the outside of the subunit, while an extended beta-hairpin is found that lines the wall of the exit tunnel in the center of the 70S ribosome. Functionally, this protein binds specifically to 23S rRNA; its binding is stimulated by other ribosomal proteins, e.g. L4, L17, and L20. It is important during the early stages of 50S assembly. It makes multiple contacts with different domains of the 23S rRNA in the assembled 50S subunit and ribosome. The polypeptide is Large ribosomal subunit protein uL22 (Acidothermus cellulolyticus (strain ATCC 43068 / DSM 8971 / 11B)).